A 908-amino-acid chain; its full sequence is Disease resistance protein RPP8 (908 aa).

Positions 15–57 form a coiled coil; the sequence is DLLSRESERLQGIDGQLDGLKRQLRSLQSLLKDADAKKHGSDR. Residues 146–459 enclose the NB-ARC domain; the sequence is RQRVQREIRQ…AEGIYDGSTI (314 aa). 192–199 is an ATP binding site; the sequence is GMGGIGKT. LRR repeat units lie at residues 575-600, 601-623, 648-673, 693-718, 722-746, 748-770, 793-820, 842-867, and 882-905; these read LTLL…IGGL, IHLR…MRNL, MIQL…DLVN, MTKL…SLRE, LETL…VLDH, IHLK…QFPP, LLHL…GFPQ, MPCL…KYIT, and KEKL…QFIN.

Belongs to the disease resistance NB-LRR family. RPP8/HRT subfamily. As to quaternary structure, interacts with the NAC protein TIP. Interacts with MORC1/CRT1. Interacts with COP1 and is subsequently degraded in a 26s proteasome dependent manner. Mostly expressed in leaves, and, to a lower extent, in roots.

Its subcellular location is the cell membrane. Its function is as follows. Disease resistance protein. Resistance proteins guard the plant against pathogens that contain an appropriate avirulence protein via an indirect interaction with this avirulence protein. That triggers a defense system including the hypersensitive response, which restricts the pathogen growth. The interaction with TIP (TCV-interacting protein) may be essential for the recognition of the avirulence proteins, and the triggering of the defense response. Triggers resistance to turnip crinkle virus (TCV) via a SAG101-dependent pathway. This is Disease resistance protein RPP8 (RPP8) from Arabidopsis thaliana (Mouse-ear cress).